The primary structure comprises 8797 residues: Nesprin-1 (8797 aa).

Residues 1-289 form an actin-binding region; it reads MATSRGASRC…KHYPDIHNAS (289 aa). Over 1–8746 the chain is Cytoplasmic; that stretch reads MATSRGASRC…GRGFLFRVLR (8746 aa). 2 Calponin-homology (CH) domains span residues 27–134 and 178–283; these read IVQK…LYFQ and GNAK…KHYP. Spectrin repeat units lie at residues 314–397, 398–502, 503–609, 610–703, 704–815, 816–923, 924–1024, 1025–1122, 1123–1246, 1247–1335, 1336–1444, 1445–1550, 1551–1653, 1654–1763, 1764–1879, 1880–1976, 1977–2081, 2082–2195, 2196–2303, 2304–2401, 2402–2513, 2514–2619, 2620–2731, 2732–2838, 2839–2962, 2963–3062, 3063–3171, 3172–3275, 3276–3387, 3388–3490, 3491–3593, 3594–3720, 3721–3814, 3815–3920, 3921–4028, 4029–4139, 4140–4235, 4236–4339, 4340–4451, 4452–4560, 4561–4669, 4670–4776, 4777–4882, 4883–4991, 4992–5099, 5100–5209, 5210–5318, 5319–5424, 5425–5522, 5523–5630, 5631–5736, and 5737–5842; these read REDR…SRLF, DWHI…HLMK, MEFL…SMLE, EVIS…YAQA, DEMD…QLLI, PLEE…KHVE, TNSR…HLKI, DVEK…LMED, PDKW…NSLE, ELIS…ERRI, QVTL…MEMV, KTKW…ILGH, LSQQ…LENL, LAHW…LQSV, VAEH…SHAS, LSGI…ADAL, AVLK…QGQC, CGLI…LRVS, LSIW…KDFT, AQST…KTQA, SLQE…LQDC, ASEL…LRSC, QVAL…LESV, ISQW…VEEI, VKDH…SGQV, AQLE…QNKE, QILQ…LENL, KIQM…VSRL, DRIV…LEGA, LSKW…SEKL, VRLH…RTQF, NNVV…YSDW, YGST…LEKG, LHLA…LEAK, VKDH…QRMY, QSLE…KHLK, SELW…REED, LQRT…IQVS, VTNL…LNKA, LSEK…LEKN, LVSR…VQEA, ILAR…LEDT, TSAY…CESR, MVQS…LTEI, YSQC…LQRC, TAQW…LEDA, VDEW…GKLV, KQEL…EQSK, ATSQ…LSKL, NQAA…LQDA, AKDM…MQEA, and VVQY…PSAH. A coiled-coil region spans residues 314-8666; it reads REDRVIFKEM…EKLLDVSSSQ (8353 aa). Phosphoserine is present on Ser-732. Thr-2270 carries the post-translational modification Phosphothreonine. Residue Ser-5657 is modified to Phosphoserine. Residues 5859–5886 form a disordered region; it reads PVTEESGEEGTNSEISSPPACRSPSPVA. Spectrin repeat units follow at residues 5962-6071, 6072-6178, 6374-6485, 6486-6581, 6582-6691, 6692-6795, 6796-6902, 6903-7020, 7021-7128, 7129-7237, 7238-7350, 7351-7454, 7455-7558, 7559-7671, 7672-7783, 7784-7883, 7884-7997, 7998-8106, and 8107-8216; these read LERQ…LEEK, LNDQ…SLLE, RQSI…RLQQ, ILNF…RSGL, NQNL…LETW, SHLD…TILK, HWTR…QEKL, HQLQ…LEGL, LESW…LKSV, LDQW…SKAL, LQLW…LQAG, VLDY…LQSF, LLQH…RGII, DSQI…LAFL, LKDW…NEWA, VFSE…LKET, LVAV…IEET, WRLW…LKHF, and IGQR…LPLP. A Phosphoserine modification is found at Ser-8223. Residues 8246-8279 form a disordered region; that stretch reads DSLLSPQPSSNLSLSLAQPLRSERSGRDTPASVD. A compositionally biased stretch (low complexity) spans 8247–8265; the sequence is SLLSPQPSSNLSLSLAQPL. Thr-8274 is subject to Phosphothreonine. Residues Ser-8277, Ser-8280, and Ser-8305 each carry the phosphoserine modification. Spectrin repeat units follow at residues 8329–8438, 8439–8548, and 8549–8666; these read SALE…MKQN, LQKW…LQDA, and LMQC…SSSQ. Position 8360 is a phosphothreonine (Thr-8360). Positions 8671-8734 are disordered; it reads SWSSADELDT…DSSLSEPGPG (64 aa). Composition is skewed to polar residues over residues 8680–8696 and 8704–8729; these read TSGS…PNRQ and SLSQ…SSLS. The region spanning 8738–8797 is the KASH domain; it reads RGFLFRVLRAALPLQLLLLLLIGLACLVPMSEEDYSCALSNNFARSFHPMLRYTNGPPPL. Residues 8747 to 8767 form a helical; Anchor for type IV membrane protein membrane-spanning segment; sequence AALPLQLLLLLLIGLACLVPM. The Perinuclear space segment spans residues 8768 to 8797; that stretch reads SEEDYSCALSNNFARSFHPMLRYTNGPPPL.

This sequence belongs to the nesprin family. As to quaternary structure, core component of LINC complexes which are composed of inner nuclear membrane SUN domain-containing proteins coupled to outer nuclear membrane KASH domain-containing nesprins. SUN and KASH domain-containing proteins seem to bind each other promiscuously; however, differentially expression of LINC complex constituents can give rise to specific assemblies. At least SUN1/2-containing core LINC complexes are proposed to be hexameric composed of three protomers of each KASH and SUN domain-containing protein. The SUN2:SYNE1/KASH1 LINC complex is a heterohexamer; the homotrimeric cloverleave-like conformation of the SUN domain is a prerequisite for LINC complex formation in which three separate SYNE1/KASH1 peptides bind at the interface of adjacent SUN domains. Self-associates. Interacts with SYNE3. Interacts with SPAG4/SUN4. May interact with MUSK. Interacts with F-actin via its N-terminal domain. Interacts with EMD and LMNA in vitro. Interacts (via KASH domain) with TMEM258. Post-translationally, the disulfid bond with SUN1 or SUN2 is required for stability of the respective LINC complex under tensile forces. As to expression, expressed in HeLa, A431, A172 and HaCaT cells (at protein level). Widely expressed. Highly expressed in skeletal and smooth muscles, heart, spleen, peripheral blood leukocytes, pancreas, cerebellum, stomach, kidney and placenta. Isoform GSRP-56 is predominantly expressed in heart and skeletal muscle (at protein level).

It localises to the nucleus outer membrane. The protein localises to the nucleus. Its subcellular location is the nucleus envelope. It is found in the cytoplasm. The protein resides in the cytoskeleton. It localises to the myofibril. The protein localises to the sarcomere. Its subcellular location is the golgi apparatus. In terms of biological role, multi-isomeric modular protein which forms a linking network between organelles and the actin cytoskeleton to maintain the subcellular spatial organization. As a component of the LINC (LInker of Nucleoskeleton and Cytoskeleton) complex involved in the connection between the nuclear lamina and the cytoskeleton. The nucleocytoplasmic interactions established by the LINC complex play an important role in the transmission of mechanical forces across the nuclear envelope and in nuclear movement and positioning. May be involved in nucleus-centrosome attachment and nuclear migration in neural progenitors implicating LINC complex association with SUN1/2 and probably association with cytoplasmic dynein-dynactin motor complexes; SYNE1 and SYNE2 may act redundantly. Required for centrosome migration to the apical cell surface during early ciliogenesis. May be involved in nuclear remodeling during sperm head formation in spermatogenesis; a probable SUN3:SYNE1/KASH1 LINC complex may tether spermatid nuclei to posterior cytoskeletal structures such as the manchette. The protein is Nesprin-1 of Homo sapiens (Human).